Reading from the N-terminus, the 131-residue chain is D-ribose pyranase (131 aa).

His20 (proton donor) is an active-site residue. Substrate contacts are provided by residues Asp28, His98, and 120–122 (YAN).

This sequence belongs to the RbsD / FucU family. RbsD subfamily. As to quaternary structure, homodecamer.

The protein resides in the cytoplasm. The enzyme catalyses beta-D-ribopyranose = beta-D-ribofuranose. The protein operates within carbohydrate metabolism; D-ribose degradation; D-ribose 5-phosphate from beta-D-ribopyranose: step 1/2. Functionally, catalyzes the interconversion of beta-pyran and beta-furan forms of D-ribose. The sequence is that of D-ribose pyranase from Clostridium novyi (strain NT).